A 233-amino-acid polypeptide reads, in one-letter code: Segregation and condensation protein A (233 aa).

This sequence belongs to the ScpA family. In terms of assembly, component of a cohesin-like complex composed of ScpA, ScpB and the Smc homodimer, in which ScpA and ScpB bind to the head domain of Smc. The presence of the three proteins is required for the association of the complex with DNA.

It is found in the cytoplasm. Participates in chromosomal partition during cell division. May act via the formation of a condensin-like complex containing Smc and ScpB that pull DNA away from mid-cell into both cell halves. This Streptococcus pyogenes serotype M1 protein is Segregation and condensation protein A.